The chain runs to 367 residues: Inner membrane amino-acid ABC transporter permease protein YhdY (367 aa).

Residues 1 to 36 (MTKVLLSHPPRPASHNSSRAMVWVRKNLFSSWSNSL) are Cytoplasmic-facing. Residues 37–57 (LTIGCIWLMWELIPPLLNWAF) traverse the membrane as a helical segment. Topologically, residues 58-99 (LQANWVGSTRADCTKAGACWVFIHERFGQFMYGLYPHDQRWR) are periplasmic. A helical transmembrane segment spans residues 100–120 (INLALLIGLVSIAPMFWKILP). Over 121 to 125 (HRGRY) the chain is Cytoplasmic. The helical transmembrane segment at 126-146 (IAAWAVIYPLIVWWLMYGGFF) threads the bilayer. Residues 147-162 (ALERVETRQWGGLTLT) lie on the Periplasmic side of the membrane. The ABC transmembrane type-1 domain occupies 159-353 (LTLTLIIASV…IFCFSMSRYS (195 aa)). The chain crosses the membrane as a helical span at residues 163 to 183 (LIIASVGIAGALPWGILLALG). The Cytoplasmic segment spans residues 184–192 (RRSHMPIVR). A helical transmembrane segment spans residues 193-213 (ILSVIFIEFWRGVPLITVLFM). The Periplasmic portion of the chain corresponds to 214–233 (SSVMLPLFMAEGTSIDKLIR). The helical transmembrane segment at 234–254 (ALVGVILFQSAYVAEVVRGGL) threads the bilayer. Topologically, residues 255–291 (QALPKGQYEAAESLALGYWKTQGLVILPQALKLVIPG) are cytoplasmic. The chain crosses the membrane as a helical span at residues 292–312 (LVNTIIALFKDTSLVIIIGLF). Residues 313–326 (DLFSSVQQATVDPA) are Periplasmic-facing. A helical transmembrane segment spans residues 327–347 (WLGMSTEGYVFAALIYWIFCF). At 348–367 (SMSRYSQYLEKRFNTGRTPH) the chain is on the cytoplasmic side.

This sequence belongs to the binding-protein-dependent transport system permease family. HisMQ subfamily.

The protein localises to the cell inner membrane. Its function is as follows. Probably part of the binding-protein-dependent transport system YdhWXYZ for an amino acid; probably responsible for the translocation of the substrate across the membrane. This chain is Inner membrane amino-acid ABC transporter permease protein YhdY (yhdY), found in Escherichia coli (strain K12).